The primary structure comprises 377 residues: MSAPHDPPRPEPRPDLRSLPLDRLERLVAALGERPFRARQLHRWLQQKGAASLDELTDVPRALRAALAEATTLTTLERATEQRSVDGTIKWTWRTHDGKLVESVYMPEPDRRTLCVSSQVGCAVGCTFCLTGTMGLARNLTPGEIVEQVHRANRRIVELGEGQGPRPLTNLVFMGMGEPLANYRSLKVALDLLLSEDGPNFSHRHVTVSTSGLVPMIRKLGEETPVKLAISLNATTDAQRDALMPINRRYPLAQLLEACRSFPIRNGRRITFEYVLLGGVNDSLEDAVRLARLVRGIPTKVNLIPYNANPGLPYRAPAPERVVEFQETLAARNLTAVVRKNRGGDISAACGQLAAEGGPGDPRRPAPPPLTRLPAAG.

The Proton acceptor role is filled by E102. Positions 108 to 345 (EPDRRTLCVS…AVVRKNRGGD (238 aa)) constitute a Radical SAM core domain. The cysteines at positions 115 and 350 are disulfide-linked. [4Fe-4S] cluster is bound by residues C122, C126, and C129. Residues 177–178 (GE), S209, 231–233 (SLN), and N307 contribute to the S-adenosyl-L-methionine site. C350 functions as the S-methylcysteine intermediate in the catalytic mechanism. Residues 354–377 (AAEGGPGDPRRPAPPPLTRLPAAG) form a disordered region.

The protein belongs to the radical SAM superfamily. RlmN family. [4Fe-4S] cluster serves as cofactor.

The protein localises to the cytoplasm. It catalyses the reaction adenosine(2503) in 23S rRNA + 2 reduced [2Fe-2S]-[ferredoxin] + 2 S-adenosyl-L-methionine = 2-methyladenosine(2503) in 23S rRNA + 5'-deoxyadenosine + L-methionine + 2 oxidized [2Fe-2S]-[ferredoxin] + S-adenosyl-L-homocysteine. The enzyme catalyses adenosine(37) in tRNA + 2 reduced [2Fe-2S]-[ferredoxin] + 2 S-adenosyl-L-methionine = 2-methyladenosine(37) in tRNA + 5'-deoxyadenosine + L-methionine + 2 oxidized [2Fe-2S]-[ferredoxin] + S-adenosyl-L-homocysteine. In terms of biological role, specifically methylates position 2 of adenine 2503 in 23S rRNA and position 2 of adenine 37 in tRNAs. m2A2503 modification seems to play a crucial role in the proofreading step occurring at the peptidyl transferase center and thus would serve to optimize ribosomal fidelity. The chain is Dual-specificity RNA methyltransferase RlmN from Anaeromyxobacter sp. (strain Fw109-5).